A 2146-amino-acid chain; its full sequence is MAFWTQLMLLLWKNFMYRRRQPVQLLVELLWPLFLFFILVAVRHSHPPLEHHECHFPNKPLPSAGTVPWLQGLICNVNNTCFPQLTPGEEPGRLSNFNDSLVSRLLADARTVLGGASAHRTLAGLGKLIATLRAARSTAQPQPTKQSPLEPPMLDVAELLTSLLRTESLGLALGQAQEPLHSLLEAAEDLAQELLALRSLVELRALLQRPRGTSGPLELLSEALCSVRGPSSTVGPSLNWYEASDLMELVGQEPESALPDSSLSPACSELIGALDSHPLSRLLWRRLKPLILGKLLFAPDTPFTRKLMAQVNRTFEELTLLRDVREVWEMLGPRIFTFMNDSSNVAMLQRLLQMQDEGRRQPRPGGRDHMEALRSFLDPGSGGYSWQDAHADVGHLVGTLGRVTECLSLDKLEAAPSEAALVSRALQLLAEHRFWAGVVFLGPEDSSDPTEHPTPDLGPGHVRIKIRMDIDVVTRTNKIRDRFWDPGPAADPLTDLRYVWGGFVYLQDLVERAAVRVLSGANPRAGLYLQQMPYPCYVDDVFLRVLSRSLPLFLTLAWIYSVTLTVKAVVREKETRLRDTMRAMGLSRAVLWLGWFLSCLGPFLLSAALLVLVLKLGDILPYSHPGVVFLFLAAFAVATVTQSFLLSAFFSRANLAAACGGLAYFSLYLPYVLCVAWRDRLPAGGRVAASLLSPVAFGFGCESLALLEEQGEGAQWHNVGTRPTADVFSLAQVSGLLLLDAALYGLATWYLEAVCPGQYGIPEPWNFPFRRSYWCGPRPPKSPAPCPTPLDPKVLVEEAPPGLSPGVSVRSLEKRFPGSPQPALRGLSLDFYQGHITAFLGHNGAGKTTTLSILSGLFPPSGGSAFILGHDVRSSMAAIRPHLGVCPQYNVLFDMLTVDEHVWFYGRLKGLSAAVVGPEQDRLLQDVGLVSKQSVQTRHLSGGMQRKLSVAIAFVGGSQVVILDEPTAGVDPASRRGIWELLLKYREGRTLILSTHHLDEAELLGDRVAVVAGGRLCCCGSPLFLRRHLGSGYYLTLVKARLPLTTNEKADTDMEGSVDTRQEKKNGSQGSRVGTPQLLALVQHWVPGARLVEELPHELVLVLPYTGAHDGSFATLFRELDTRLAELRLTGYGISDTSLEEIFLKVVEECAADTDMEDGSCGQHLCTGIAGLDVTLRLKMPPQETALENGEPAGSAPETDQGSGPDAVGRVQGWALTRQQLQALLLKRFLLARRSRRGLFAQIVLPALFVGLALVFSLIVPPFGHYPALRLSPTMYGAQVSFFSEDAPGDPGRARLLEALLQEAGLEEPPVQHSSHRFSAPEVPAEVAKVLASGNWTPESPSPACQCSRPGARRLLPDCPAAAGGPPPPQAVTGSGEVVQNLTGRNLSDFLVKTYPRLVRQGLKTKKWVNEVRYGGFSLGGRDPGLPSGQELGRSVEELWALLSPLPGGALDRVLKNLTAWAHSLDAQDSLKIWFNNKGWHSMVAFVNRASNAILRAHLPPGPARHAHSITTLNHPLNLTKEQLSEGALMASSVDVLVSICVVFAMSFVPASFTLVLIEERVTRAKHLQLMGGLSPTLYWLGNFLWDMCNYLVPACIVVLIFLAFQQRAYVAPANLPALLLLLLLYGWSITPLMYPASFFFSVPSTAYVVLTCINLFIGINGSMATFVLELFSDQKLQEVSRILKQVFLIFPHFCLGRGLIDMVRNQAMADAFERLGDRQFQSPLRWEVVGKNLLAMVIQGPLFLLFTLLLQHRSQLLPQPRVRSLPLLGEEDEDVARERERVVQGATQGDVLVLRNLTKVYRGQRMPAVDRLCLGIPPGECFGLLGVNGAGKTSTFRMVTGDTLASRGEAVLAGHSVAREPSAAHLSMGYCPQSDAIFELLTGREHLELLARLRGVPEAQVAQTAGSGLARLGLSWYADRPAGTYSGGNKRKLATALALVGDPAVVFLDEPTTGMDPSARRFLWNSLLAVVREGRSVMLTSHSMEECEALCSRLAIMVNGRFRCLGSPQHLKGRFAAGHTLTLRVPAARSQPAAAFVAAEFPGAELREAHGGRLRFQLPPGGRCALARVFGELAVHGAEHGVEDFSVSQTMLEEVFLYFSKDQGKDEDTEEQKEAGVGVDPAPGLQHPKRVSQFLDDPSTAETVL.

Residues 22-42 form a helical membrane-spanning segment; the sequence is PVQLLVELLWPLFLFFILVAV. The Extracellular portion of the chain corresponds to 43 to 549; sequence RHSHPPLEHH…DVFLRVLSRS (507 aa). Cysteines 75 and 225 form a disulfide. The N-linked (GlcNAc...) asparagine glycan is linked to Asn312. A run of 6 helical transmembrane segments spans residues 550-570, 593-613, 626-646, 655-675, 687-707, and 727-747; these read LPLFLTLAWIYSVTLTVKAVV, LGWFLSCLGPFLLSAALLVLV, GVVFLFLAAFAVATVTQSFLL, LAAACGGLAYFSLYLPYVLCV, VAASLLSPVAFGFGCESLALL, and VFSLAQVSGLLLLDAALYGLA. In terms of domain architecture, ABC transporter 1 spans 807-1038; it reads VSVRSLEKRF…LGSGYYLTLV (232 aa). 841 to 848 is an ATP binding site; it reads GHNGAGKT. The chain crosses the membrane as a helical span at residues 849–869; sequence TTLSILSGLFPPSGGSAFILG. Basic and acidic residues predominate over residues 1048 to 1066; the sequence is EKADTDMEGSVDTRQEKKN. 2 disordered regions span residues 1048-1072 and 1185-1209; these read EKADTDMEGSVDTRQEKKNGSQGSR and TALENGEPAGSAPETDQGSGPDAVG. The helical transmembrane segment at 1243 to 1263 threads the bilayer; that stretch reads IVLPALFVGLALVFSLIVPPF. The Extracellular portion of the chain corresponds to 1264 to 1537; the sequence is GHYPALRLSP…ALMASSVDVL (274 aa). An intrachain disulfide couples Cys1345 to Cys1359. 6 helical membrane-spanning segments follow: residues 1538-1558, 1584-1604, 1621-1641, 1649-1669, 1683-1703, and 1729-1749; these read VSICVVFAMSFVPASFTLVLI, FLWDMCNYLVPACIVVLIFLA, LLLLLYGWSITPLMYPASFFF, VVLTCINLFIGINGSMATFVL, ILKQVFLIFPHFCLGRGLIDM, and VVGKNLLAMVIQGPLFLLFTL. In terms of domain architecture, ABC transporter 2 spans 1793-2025; sequence LVLRNLTKVY…FAAGHTLTLR (233 aa). 1827–1834 contacts ATP; it reads GVNGAGKT. A disordered region spans residues 2104–2146; sequence QGKDEDTEEQKEAGVGVDPAPGLQHPKRVSQFLDDPSTAETVL.

It belongs to the ABC transporter superfamily. ABCA family. N-glycosylated. In terms of tissue distribution, expressed in leukocytes (at protein level). Widely expressed. Highly expressed in myelo-lymphatic tissues including peripheral leukocytes, thymus, spleen and bone marrow. Expressed in the hippocampus and the cerebellum. Isoform 2: Abundant in lymph node, spleen, thymus and trachea. Isoform 1: Strongly expressed in brain and bone marrow.

It localises to the cell membrane. The protein localises to the golgi apparatus membrane. The protein resides in the early endosome membrane. Its subcellular location is the cytoplasm. It is found in the cell projection. It localises to the ruffle membrane. The protein localises to the phagocytic cup. The protein resides in the endoplasmic reticulum. The enzyme catalyses ATP + H2O + phospholipidSide 1 = ADP + phosphate + phospholipidSide 2.. It catalyses the reaction a 1,2-diacyl-sn-glycero-3-phosphocholine(out) + ATP + H2O = a 1,2-diacyl-sn-glycero-3-phosphocholine(in) + ADP + phosphate + H(+). It carries out the reaction a 1,2-diacyl-sn-glycero-3-phospho-L-serine(out) + ATP + H2O = a 1,2-diacyl-sn-glycero-3-phospho-L-serine(in) + ADP + phosphate + H(+). ATPase activity is decreased by cholesterol and ceramide. ATPase activity is stimulated by phosphatidylserine, phosphatidylcholine and sphingomyelin, but phosphatidylserine is more effective. Catalyzes the translocation of specific phospholipids from the cytoplasmic to the extracellular/lumenal leaflet of membrane coupled to the hydrolysis of ATP. Transports preferentially phosphatidylserine over phosphatidylcholine. Plays a role in lipid homeostasis and macrophage-mediated phagocytosis. Binds APOA1 and may function in apolipoprotein-mediated phospholipid efflux from cells. May also mediate cholesterol efflux. May regulate cellular ceramide homeostasis during keratinocyte differentiation. Involved in lipid raft organization and CD1D localization on thymocytes and antigen-presenting cells, which plays an important role in natural killer T-cell development and activation. Plays a role in phagocytosis of apoptotic cells by macrophages. Macrophage phagocytosis is stimulated by APOA1 or APOA2, probably by stabilization of ABCA7. Also involved in phagocytic clearance of amyloid-beta by microglia cells and macrophages. Further limits amyloid-beta production by playing a role in the regulation of amyloid-beta A4 precursor protein (APP) endocytosis and/or processing. Amyloid-beta is the main component of amyloid plaques found in the brains of Alzheimer patients. This chain is Phospholipid-transporting ATPase ABCA7, found in Homo sapiens (Human).